Consider the following 55-residue polypeptide: MYTRSSGLKTLKLDDLVQVVKLTRVDTPHPAQHVGIPTIRNVGLLEPLPVMQGRV.

This is an uncharacterized protein from Avena byzantina (Oat).